A 552-amino-acid polypeptide reads, in one-letter code: Putative pentatricopeptide repeat-containing protein At1g64310 (552 aa).

13 PPR repeats span residues 39–69, 70–104, 105–139, 140–170, 171–205, 206–240, 241–271, 272–306, 307–341, 342–372, 373–407, 408–438, and 444–474; these read DPYF…FPER, SVFL…DTRP, DNFT…GLGF, DQIC…IPDP, DLAL…GHQP, NCYT…NLDS, HSYV…ISEP, DLVA…GKKP, DCVL…GLEL, DIKV…IPEK, NIVS…GLIP, DEIT…MKSE, and QTEH…LQKP. The interval 479-552 is type E motif; degenerate; it reads ILGALLSCCE…GGKLPGISWF (74 aa).

The protein belongs to the PPR family. PCMP-E subfamily.

This Arabidopsis thaliana (Mouse-ear cress) protein is Putative pentatricopeptide repeat-containing protein At1g64310 (PCMP-E65).